The chain runs to 87 residues: UPF0367 protein SynWH7803_2240 (87 aa).

The protein belongs to the UPF0367 family.

The polypeptide is UPF0367 protein SynWH7803_2240 (Synechococcus sp. (strain WH7803)).